Reading from the N-terminus, the 451-residue chain is Phosphoglucosamine mutase (451 aa).

S102 serves as the catalytic Phosphoserine intermediate. 4 residues coordinate Mg(2+): S102, D243, D245, and D247. At S102 the chain carries Phosphoserine.

This sequence belongs to the phosphohexose mutase family. It depends on Mg(2+) as a cofactor. In terms of processing, activated by phosphorylation.

It carries out the reaction alpha-D-glucosamine 1-phosphate = D-glucosamine 6-phosphate. Catalyzes the conversion of glucosamine-6-phosphate to glucosamine-1-phosphate. In Paramagnetospirillum magneticum (strain ATCC 700264 / AMB-1) (Magnetospirillum magneticum), this protein is Phosphoglucosamine mutase.